Reading from the N-terminus, the 91-residue chain is Small membrane A-kinase anchor protein (91 aa).

Glycine 2 carries N-myristoyl glycine lipidation.

The protein belongs to the small membrane AKAP family. Post-translationally, may be palmitoylated at Cys-3.

It is found in the cell membrane. In terms of biological role, binds to type I regulatory subunits of protein kinase A and may anchor/target them to the plasma membrane. This Xenopus tropicalis (Western clawed frog) protein is Small membrane A-kinase anchor protein.